The chain runs to 596 residues: Chaperone protein DnaK (596 aa).

T180 bears the Phosphothreonine; by autocatalysis mark.

It belongs to the heat shock protein 70 family.

Functionally, acts as a chaperone. In Thermotoga neapolitana (strain ATCC 49049 / DSM 4359 / NBRC 107923 / NS-E), this protein is Chaperone protein DnaK.